The chain runs to 459 residues: XK-related protein 3 (459 aa).

A run of 10 helical transmembrane segments spans residues 35–55, 68–88, 97–117, 169–189, 199–219, 238–258, 264–284, 300–320, 345–365, and 377–397; these read FSII…LYMF, SFTI…LMFF, AALL…LHTI, IQAF…SLTI, LMTF…ILAI, VVMW…FFIA, SLPV…LEFW, MVGT…INFS, ILHY…FRFF, and LIAV…LLFY.

Belongs to the XK family. Expressed predominantly, if not exclusively, in testis.

It localises to the cell membrane. The protein is XK-related protein 3 (XKR3) of Homo sapiens (Human).